A 794-amino-acid chain; its full sequence is cAMP and cAMP-inhibited cGMP 3',5'-cyclic phosphodiesterase 10A (794 aa).

Residues 296-297 (RC), 340-341 (IA), threonine 374, glutamine 393, and histidine 525 contribute to the 3',5'-cyclic AMP site. A PDEase domain is found at 452–769 (TSEEWQGLMH…NQWEKVIRGE (318 aa)). The Proton donor role is filled by histidine 525. Histidine 525 contacts 3',5'-cyclic GMP. 4 residues coordinate a divalent metal cation: histidine 529, histidine 563, aspartate 564, and aspartate 674. Glutamine 726 contributes to the 3',5'-cyclic AMP binding site. Glutamine 726 provides a ligand contact to 3',5'-cyclic GMP.

The protein belongs to the cyclic nucleotide phosphodiesterase family. Homodimer. A divalent metal cation serves as cofactor. Detected in striatum and testis (at protein level). Detected in whole brain, hippocampus, olfactory bulb, striatum neurons and testis.

It is found in the cytoplasm. The protein localises to the cytosol. The catalysed reaction is a nucleoside 3',5'-cyclic phosphate + H2O = a nucleoside 5'-phosphate + H(+). It carries out the reaction 3',5'-cyclic AMP + H2O = AMP + H(+). The enzyme catalyses 3',5'-cyclic GMP + H2O = GMP + H(+). The protein operates within purine metabolism; 3',5'-cyclic AMP degradation; AMP from 3',5'-cyclic AMP: step 1/1. Its pathway is purine metabolism; 3',5'-cyclic GMP degradation; GMP from 3',5'-cyclic GMP: step 1/1. Its activity is regulated as follows. Inhibited by dipyridamole and moderately by IBMX, zaprinast and rolipram. Plays a role in signal transduction by regulating the intracellular concentration of cyclic nucleotides. Can hydrolyze both cAMP and cGMP, but has higher affinity for cAMP and is more efficient with cAMP as substrate. The sequence is that of cAMP and cAMP-inhibited cGMP 3',5'-cyclic phosphodiesterase 10A (Pde10a) from Rattus norvegicus (Rat).